The chain runs to 126 residues: MQLSLLKAKIHRATVSHSELNYEGSIAIDGLLLEAAGLYEFEKVHIWNVTNGARFTTYAIRAEHGSGIISVNGGAARYVQVGDLVIVAAFAQMSEDEAAVFRPNLVYVNAANAMTHTNHSIPTQVA.

Residue S25 is the Schiff-base intermediate with substrate; via pyruvic acid of the active site. Residue S25 is modified to Pyruvic acid (Ser). Residue T57 coordinates substrate. Y58 functions as the Proton donor in the catalytic mechanism. 73 to 75 (GGA) is a binding site for substrate.

This sequence belongs to the PanD family. As to quaternary structure, heterooctamer of four alpha and four beta subunits. It depends on pyruvate as a cofactor. Post-translationally, is synthesized initially as an inactive proenzyme, which is activated by self-cleavage at a specific serine bond to produce a beta-subunit with a hydroxyl group at its C-terminus and an alpha-subunit with a pyruvoyl group at its N-terminus.

It is found in the cytoplasm. It catalyses the reaction L-aspartate + H(+) = beta-alanine + CO2. It participates in cofactor biosynthesis; (R)-pantothenate biosynthesis; beta-alanine from L-aspartate: step 1/1. Its function is as follows. Catalyzes the pyruvoyl-dependent decarboxylation of aspartate to produce beta-alanine. The protein is Aspartate 1-decarboxylase of Xylella fastidiosa (strain Temecula1 / ATCC 700964).